The primary structure comprises 372 residues: Segmentation polarity homeobox protein engrailed (372 aa).

Disordered regions lie at residues 1-35 (MAFE…YSPQ), 47-112 (YERG…LQPT), 196-246 (ERLS…QSNP), and 261-286 (DRPS…PRTA). Composition is skewed to basic and acidic residues over residues 79–105 (DYYR…DRSR) and 197–215 (RLSR…KRPD). Residues 216–244 (SASSIVSSTSSGAVSTCGSSDASSIQSQS) are compositionally biased toward low complexity. Positions 280–339 (EKRPRTAFSGAQLARLKHEFAENRYLTERRRQSLAAELGLAEAQIKIWFQNKRAKIKKAS) form a DNA-binding region, homeobox.

This sequence belongs to the engrailed homeobox family. In terms of tissue distribution, expressed in the middle silk gland but not in the posterior silk gland during the fourth molt/fifth intermolt period.

The protein resides in the nucleus. In terms of biological role, this protein might be involved in the compartmentalization of the silk gland. This chain is Segmentation polarity homeobox protein engrailed (en), found in Bombyx mori (Silk moth).